The chain runs to 296 residues: Protoheme IX farnesyltransferase 1 (296 aa).

Transmembrane regions (helical) follow at residues 14–34, 41–61, 86–106, 108–128, 141–161, 165–185, 230–250, and 274–294; these read IVLLLVITAVTTMYAGDALSA, LWDYAHLMAAGALASAGSSAL, IGENIVLAYGLAISSAAVVYA, FLLNAPTAFFIALGIFSYVII, IVIGGIAGSAASWAGWTAATG, LLGFLIGFLVFVWTPSHFWCL, AFGMGLVYLVIAVASGGLMLV, and YLTIIFAAVALDAAFHYPFPF.

This sequence belongs to the UbiA prenyltransferase family. Protoheme IX farnesyltransferase subfamily.

It localises to the cell membrane. It catalyses the reaction heme b + (2E,6E)-farnesyl diphosphate + H2O = Fe(II)-heme o + diphosphate. It functions in the pathway porphyrin-containing compound metabolism; heme O biosynthesis; heme O from protoheme: step 1/1. In terms of biological role, converts heme B (protoheme IX) to heme O by substitution of the vinyl group on carbon 2 of heme B porphyrin ring with a hydroxyethyl farnesyl side group. The protein is Protoheme IX farnesyltransferase 1 of Cenarchaeum symbiosum (strain A).